Consider the following 74-residue polypeptide: Translation initiation factor IF-1 (74 aa).

Positions 1–72 constitute an S1-like domain; sequence MAKETEMEFE…TRGRITYRKI (72 aa).

Belongs to the IF-1 family. In terms of assembly, component of the 30S ribosomal translation pre-initiation complex which assembles on the 30S ribosome in the order IF-2 and IF-3, IF-1 and N-formylmethionyl-tRNA(fMet); mRNA recruitment can occur at any time during PIC assembly.

It is found in the cytoplasm. In terms of biological role, one of the essential components for the initiation of protein synthesis. Stabilizes the binding of IF-2 and IF-3 on the 30S subunit to which N-formylmethionyl-tRNA(fMet) subsequently binds. Helps modulate mRNA selection, yielding the 30S pre-initiation complex (PIC). Upon addition of the 50S ribosomal subunit IF-1, IF-2 and IF-3 are released leaving the mature 70S translation initiation complex. The chain is Translation initiation factor IF-1 from Mycoplasma capricolum subsp. capricolum (strain California kid / ATCC 27343 / NCTC 10154).